We begin with the raw amino-acid sequence, 379 residues long: Cell division protein FtsZ (379 aa).

GTP contacts are provided by residues Gly18–Asn22, Gly105–Gly107, Glu136, Arg140, and Asp184.

The protein belongs to the FtsZ family. Homodimer. Polymerizes to form a dynamic ring structure in a strictly GTP-dependent manner. Interacts directly with several other division proteins.

It localises to the cytoplasm. Its function is as follows. Essential cell division protein that forms a contractile ring structure (Z ring) at the future cell division site. The regulation of the ring assembly controls the timing and the location of cell division. One of the functions of the FtsZ ring is to recruit other cell division proteins to the septum to produce a new cell wall between the dividing cells. Binds GTP and shows GTPase activity. The polypeptide is Cell division protein FtsZ (Mycobacterium bovis (strain ATCC BAA-935 / AF2122/97)).